The chain runs to 277 residues: Glutamate racemase (277 aa).

Substrate is bound by residues D16–S17 and Y48–G49. C79 acts as the Proton donor/acceptor in catalysis. N80 to T81 contacts substrate. The Proton donor/acceptor role is filled by C191. T192 to H193 lines the substrate pocket.

The protein belongs to the aspartate/glutamate racemases family.

The catalysed reaction is L-glutamate = D-glutamate. The protein operates within cell wall biogenesis; peptidoglycan biosynthesis. Its function is as follows. Provides the (R)-glutamate required for cell wall biosynthesis. The protein is Glutamate racemase of Symbiobacterium thermophilum (strain DSM 24528 / JCM 14929 / IAM 14863 / T).